Here is a 242-residue protein sequence, read N- to C-terminus: Ribonuclease HII (242 aa).

In terms of domain architecture, RNase H type-2 spans 21-234; sequence KIIVGLDEAG…SKNLLKEIEE (214 aa). The a divalent metal cation site is built by aspartate 27, glutamate 28, and aspartate 128.

The protein belongs to the RNase HII family. Requires Mn(2+) as cofactor. It depends on Mg(2+) as a cofactor.

It is found in the cytoplasm. The catalysed reaction is Endonucleolytic cleavage to 5'-phosphomonoester.. Its function is as follows. Endonuclease that specifically degrades the RNA of RNA-DNA hybrids. The sequence is that of Ribonuclease HII from Methanococcus maripaludis (strain DSM 14266 / JCM 13030 / NBRC 101832 / S2 / LL).